Reading from the N-terminus, the 448-residue chain is U1 small nuclear ribonucleoprotein 70 kDa (448 aa).

The segment at threonine 91–glycine 201 is required for interaction with U1 RNA. The RRM domain maps to arginine 102–alanine 180. The disordered stretch occupies residues proline 188–glutamine 448. Residues leucine 191–arginine 200 are compositionally biased toward gly residues. Composition is skewed to basic and acidic residues over residues asparagine 206–proline 234 and glutamate 262–arginine 272. Residues serine 281 to alanine 293 are compositionally biased toward basic residues. Basic and acidic residues-rich tracts occupy residues glycine 294–arginine 320 and arginine 346–glutamate 376. Residues arginine 405–glycine 425 are mediates binding to Psi. A compositionally biased stretch (polar residues) spans asparagine 426–glutamine 448.

In terms of assembly, component of the U1 snRNP. Interacts with Psi; essential for alternative splicing of P-element transposase. Interacts with the SMN complex.

Its subcellular location is the nucleus speckle. The protein localises to the nucleus. It localises to the nucleoplasm. Mediates the splicing of pre-mRNA by binding to the stem loop I region of U1-snRNA. Required during oogenesis for nurse cell chromatin dispersal. The polypeptide is U1 small nuclear ribonucleoprotein 70 kDa (snRNP-U1-70K) (Drosophila melanogaster (Fruit fly)).